A 352-amino-acid polypeptide reads, in one-letter code: GTPase Obg (352 aa).

The Obg domain maps to 1–159; that stretch reads MQFIDQAEIQ…RMLRLELKLL (159 aa). Residues 160 to 330 form the OBG-type G domain; it reads AEVGIIGLPN…LMQEIWGLLE (171 aa). GTP is bound by residues 166–173, 191–195, 213–216, 280–283, and 311–313; these read GLPNAGKS, FTTLV, DIPG, NKVD, and SAV. Residues Ser173 and Thr193 each contribute to the Mg(2+) site.

This sequence belongs to the TRAFAC class OBG-HflX-like GTPase superfamily. OBG GTPase family. As to quaternary structure, monomer. Requires Mg(2+) as cofactor.

Its subcellular location is the cytoplasm. Its function is as follows. An essential GTPase which binds GTP, GDP and possibly (p)ppGpp with moderate affinity, with high nucleotide exchange rates and a fairly low GTP hydrolysis rate. Plays a role in control of the cell cycle, stress response, ribosome biogenesis and in those bacteria that undergo differentiation, in morphogenesis control. The protein is GTPase Obg of Trichodesmium erythraeum (strain IMS101).